A 671-amino-acid polypeptide reads, in one-letter code: MSTWGFASPTPDRFAVSAEAEDKVREQQTRLERIFNVGMSVLSKDCPENPHIWLQLEGPKENVCRAKEYLKGLCSPELQSEIHYPPRLHCIFLGAHGFFLDCLAWSTSAHLVPLLPGSLMISGLTEAFVMAQSRVEELVQRLSWDLQLQSCPGAPDNGGVLRDFSALLQTREDAYTEALLRLPLAVQEELLSLVQEASRGQGPSREVGSSGLLSPQFQGVRAPLNEGREFVGTRVAGSGKSPAVRGQSHTVEKEERKQDAVRDMGSGRKELSGEEVWEPGVAYRSQLAGGGAEEVAPLKGKASGKQEVPQQRGGFSVQGEPSGAHVPCQRAAPIRGASLLQRLHNGSASPPRVPSPPPAPEPPWPCGDRDRDRDRGDRGDKQQAGARGRGSPWKRGTRGGNLVTGTQRFQEALQDPFTLCLANVPGQPDLRHIVIDGSNVAMVHGLQHYFSSRGIALAVQYFWDRGHRDITVFVPQWRFSKDSKVRESHFLQKLYSLSLLSLTPSRVMDGKRISSYDDRFMVKLAEETDGIIVSNDQFRDLAEESDKWMAIIRERLLPFTFVGNLFMVPDDPLGRNGPTLDEFLKKPVRKQGSSKTQQPSKGSTEQANQQQGKDADRSNGGIRKTRETERLRRQLLEVFWGQDHKVDFILQREPYCRDINQLSEALLSLNF.

Disordered regions lie at residues 234–274 (RVAG…LSGE), 294–327 (EVAP…AHVP), 344–402 (HNGS…GGNL), and 577–626 (GPTL…RKTR). Residues 250–272 (TVEKEERKQDAVRDMGSGRKELS) show a composition bias toward basic and acidic residues. Over residues 351-365 (PRVPSPPPAPEPPWP) the composition is skewed to pro residues. Position 355 is a phosphoserine (S355). A compositionally biased stretch (basic and acidic residues) spans 367–381 (GDRDRDRDRGDRGDK). Residues 430 to 582 (LRHIVIDGSN…LGRNGPTLDE (153 aa)) enclose the RNase NYN domain. Over residues 591 to 612 (QGSSKTQQPSKGSTEQANQQQG) the composition is skewed to polar residues.

Belongs to the N4BP1 family.

This Mus musculus (Mouse) protein is Protein KHNYN (Khnyn).